The primary structure comprises 475 residues: Glutamyl-tRNA(Gln) amidotransferase subunit A (475 aa).

Catalysis depends on charge relay system residues lysine 76 and serine 151. Serine 175 serves as the catalytic Acyl-ester intermediate.

This sequence belongs to the amidase family. GatA subfamily. In terms of assembly, heterotrimer of A, B and C subunits.

It catalyses the reaction L-glutamyl-tRNA(Gln) + L-glutamine + ATP + H2O = L-glutaminyl-tRNA(Gln) + L-glutamate + ADP + phosphate + H(+). In terms of biological role, allows the formation of correctly charged Gln-tRNA(Gln) through the transamidation of misacylated Glu-tRNA(Gln) in organisms which lack glutaminyl-tRNA synthetase. The reaction takes place in the presence of glutamine and ATP through an activated gamma-phospho-Glu-tRNA(Gln). This Pelodictyon phaeoclathratiforme (strain DSM 5477 / BU-1) protein is Glutamyl-tRNA(Gln) amidotransferase subunit A.